A 268-amino-acid chain; its full sequence is Phosphatidylglycerol--prolipoprotein diacylglyceryl transferase (268 aa).

Transmembrane regions (helical) follow at residues 27–47 (PALRWYGFTYLVGFVAAMWLL), 66–86 (LLFYGFLGVILGGRIGYVLFY), 104–124 (GGMSFHGGLIGVITAMIYITW), 130–150 (FFAVADMVAPVVPIGLGAGRI), 181–201 (PSQLYQFALEGVALFLLLYWF), 208–228 (VGAVSGMFLLGYGIFRVIVET), and 242–262 (LMTMGQILSVPMILFGLYLIL). R149 is a binding site for a 1,2-diacyl-sn-glycero-3-phospho-(1'-sn-glycerol).

Belongs to the Lgt family.

It is found in the cell inner membrane. The enzyme catalyses L-cysteinyl-[prolipoprotein] + a 1,2-diacyl-sn-glycero-3-phospho-(1'-sn-glycerol) = an S-1,2-diacyl-sn-glyceryl-L-cysteinyl-[prolipoprotein] + sn-glycerol 1-phosphate + H(+). Its pathway is protein modification; lipoprotein biosynthesis (diacylglyceryl transfer). Catalyzes the transfer of the diacylglyceryl group from phosphatidylglycerol to the sulfhydryl group of the N-terminal cysteine of a prolipoprotein, the first step in the formation of mature lipoproteins. The protein is Phosphatidylglycerol--prolipoprotein diacylglyceryl transferase of Shewanella oneidensis (strain ATCC 700550 / JCM 31522 / CIP 106686 / LMG 19005 / NCIMB 14063 / MR-1).